Consider the following 190-residue polypeptide: MAKATTIKEALARWEEKTSQKPSEAREIKLYAQIPPIEKMDASLSTLSNCEKLSLSTNCIEKIANLNGLKNLRILSLGRNNIKNLNGLEAVGDTLEELWISYNFIEKLKGIHVMKKLKILYMSNNLVKDWAEFVKLAELPCLEDLVFVGNPLEEKHSAEGNWVEEATKRVPKLKKLDGTPVIKEDEEEDN.

N-acetylalanine is present on Ala-2. 4 LRR repeats span residues 49–70 (NCEK…NGLK), 71–92 (NLRI…EAVG), 94–115 (TLEE…HVMK), and 116–137 (KLKI…VKLA). At Ser-56 the chain carries Phosphoserine. One can recognise an LRRCT domain in the interval 150 to 190 (NPLEEKHSAEGNWVEEATKRVPKLKKLDGTPVIKEDEEEDN).

This sequence belongs to the dynein light chain LC1-type family. Interacts with ZMYND10 (via C-terminus). Interacts with DNAH5, a outer arm dynein heavy chain. Interacts with tubulin located within the A-tubule of the outer doublets in a ATP-independent manner.

The protein localises to the cytoplasm. Its subcellular location is the cytoskeleton. The protein resides in the cilium axoneme. Its function is as follows. Part of the multisubunit axonemal ATPase complexes that generate the force for cilia motility and govern beat frequency. Component of the outer arm dynein (ODA). May be involved in a mechanosensory feedback mechanism controlling ODA activity based on external conformational cues by tethering the outer arm dynein heavy chain (DNAH5) to the microtubule within the axoneme. Important for ciliary function in the airways and for the function of the cilia that produce the nodal flow essential for the determination of the left-right asymmetry. The sequence is that of Dynein axonemal light chain 1 (DNAL1) from Bos taurus (Bovine).